A 151-amino-acid chain; its full sequence is Guanylate kinase homolog (151 aa).

Positions 1 to 141 (MEREGVDYHY…AYSKLIQILQ (141 aa)) constitute a Guanylate kinase-like domain.

Belongs to the guanylate kinase family.

The chain is Guanylate kinase homolog from Bos taurus (Bovine).